Consider the following 525-residue polypeptide: GMP synthase [glutamine-hydrolyzing] (525 aa).

A Glutamine amidotransferase type-1 domain is found at 9–207 (RILILDFGSQ…VLDICQCEKL (199 aa)). C86 functions as the Nucleophile in the catalytic mechanism. Residues H181 and E183 contribute to the active site. Residues 208–400 (WTPDAIIEDA…LGLPYDMLYR (193 aa)) form the GMPS ATP-PPase domain. An ATP-binding site is contributed by 235–241 (SGGVDSS).

Homodimer.

It carries out the reaction XMP + L-glutamine + ATP + H2O = GMP + L-glutamate + AMP + diphosphate + 2 H(+). The protein operates within purine metabolism; GMP biosynthesis; GMP from XMP (L-Gln route): step 1/1. In terms of biological role, catalyzes the synthesis of GMP from XMP. This chain is GMP synthase [glutamine-hydrolyzing], found in Pseudoalteromonas atlantica (strain T6c / ATCC BAA-1087).